Reading from the N-terminus, the 2564-residue chain is Spectrin beta chain, non-erythrocytic 4 (2564 aa).

The tract at residues 1 to 37 is disordered; sequence MAQVPGEVDNMEGLPAPNNNPAARWESPDRGWEREQP. The segment at 1–282 is actin-binding; the sequence is MAQVPGEVDN…IITYVVSFYH (282 aa). The segment covering 26 to 36 has biased composition (basic and acidic residues); sequence ESPDRGWEREQ. Calponin-homology (CH) domains lie at 61-165 and 180-285; these read AVQK…LRFQ and RSAK…HYFS. Spectrin repeat units follow at residues 311-418, 430-533, 536-641, 774-879, 884-982, 1089-1196, 1306-1407, 1412-1512, 1515-1617, 1623-1725, 1728-1830, 1835-1935, 1944-2046, and 2049-2123; these read IERY…AALR, LAQR…RLEQ, ALQK…AELE, ALHQ…WLRD, YRMF…RKEE, RLQR…EALV, ELQH…RQLF, ADQL…RLLL, KELH…QQVL, VEQY…ALEQ, WLYQ…AQLL, ELHK…EDAR, ALRF…WLQQ, and EVHQ…QSKQ. The interval 1853-1872 is disordered; sequence KRRRLPRLTTPPEPRPSASS. A compositionally biased stretch (low complexity) spans 2208-2225; the sequence is PAAPEDAAETPATPAAAE. Disordered regions lie at residues 2208–2439 and 2533–2564; these read PAAP…KSSN and ARWG…GRRK. Composition is skewed to basic and acidic residues over residues 2227–2254, 2268–2278, and 2287–2318; these read VRPR…RQES, ERQESAEHEAA, and EQME…DLVK. Over residues 2343-2355 the composition is skewed to pro residues; sequence PSLPQPRELPPGR. Basic and acidic residues-rich tracts occupy residues 2362 to 2377 and 2424 to 2435; these read LPER…ARDR and FLLRKRELDANR. Residues 2418-2527 enclose the PH domain; sequence TVQHEGFLLR…WLEAVASSVA (110 aa). The span at 2538–2547 shows a compositional bias: polar residues; that stretch reads TLPTTSSTDE. The segment covering 2548–2564 has biased composition (basic and acidic residues); that stretch reads GNPKREGGDRRASGRRK.

This sequence belongs to the spectrin family. As to expression, expressed in skeletal muscle at the sarcolemma and in the muscle capillaries (at protein level). Abundantly expressed in brain and pancreatic islets.

The protein localises to the cytoplasm. It localises to the cytoskeleton. It is found in the cell cortex. This is Spectrin beta chain, non-erythrocytic 4 (SPTBN4) from Homo sapiens (Human).